Consider the following 828-residue polypeptide: Potassium channel SKOR (828 aa).

Over 1–86 (MGGSSGGGVS…PDNRWYKAWT (86 aa)) the chain is Cytoplasmic. A helical membrane pass occupies residues 87–107 (MFILIWALYSSFFTPLEFGFF). The Extracellular portion of the chain corresponds to 108–114 (RGLPENL). The chain crosses the membrane as a helical span at residues 115-135 (FILDIAGQIAFLVDIVLTFFV). The Cytoplasmic portion of the chain corresponds to 136 to 158 (AYRDSRTYRMIYKRSSIALRYLK). The chain crosses the membrane as a helical span at residues 159–179 (STFIIDLLACMPWDIIYKAAG). Residues 180 to 185 (EKEEVR) lie on the Extracellular side of the membrane. Residues 186–206 (YLLLIRLYRVHRVILFFHKME) traverse the membrane as a helical; Voltage-sensor segment. Topologically, residues 207 to 220 (KDIRINYLFTRIVK) are cytoplasmic. Residues 221-241 (LIFVELYCTHTAACIFYYLAT) traverse the membrane as a helical segment. Over 242 to 276 (TLPASQEGYTWIGSLKLGDYSYSKFREIDLWTRYT) the chain is Extracellular. Residues 277 to 296 (TSMYFAVVTMATVGYGDIHA) constitute an intramembrane region (pore-forming). Residues 297–300 (VNMR) are Extracellular-facing. The chain crosses the membrane as a helical span at residues 301–321 (EMIFAMVYISFDMILGAYLIG). Topologically, residues 322-828 (NMTALIVKGS…GQKLYLAVET (507 aa)) are cytoplasmic. 403–523 (LFRGCSSEFI…RRILNNLLEG (121 aa)) contacts a nucleoside 3',5'-cyclic phosphate. ANK repeat units follow at residues 545 to 576 (EAELALKLNSAAFYGDLYQLKSLIRAGGDPNK), 580 to 609 (DGRSPLHLAASRGYEDITLYLIQESVDVNI), 613 to 642 (LGSTPLLEAIKNGNDRVAALLVKEGATLNI), 644 to 673 (NAGTFLCTVVAKGDSDFLKRLLSNGIDPNS), 677 to 706 (DHRTPLHVAASEGFYVLAIQLVEASANVLA), and 710 to 740 (WGNTPLDEALGCGNKMLIKLLEDAKNSQISS). In terms of domain architecture, KHA spans 756 to 828 (KCTVYFSHPG…GQKLYLAVET (73 aa)).

This sequence belongs to the potassium channel family. Plant (TC 1.A.1.4) subfamily. In terms of assembly, the potassium channel is probably composed of a homo- or heterotetrameric complex of pore-forming subunits. In terms of tissue distribution, expressed in root pericycle and xylem parenchyma, and in flower at a lower level.

It is found in the membrane. In terms of biological role, highly selective outward-rectifying potassium channel. Involved in potassium release into the xylem sap toward the shoots. Assuming opened or closed conformations in response to the voltage difference across the membrane, the channel is activated by depolarization. The voltage-dependence of the channel is abolished by internal or external acidification. May interact with the cytoskeleton or with regulatory proteins. The protein is Potassium channel SKOR (SKOR) of Arabidopsis thaliana (Mouse-ear cress).